Here is a 193-residue protein sequence, read N- to C-terminus: dTTP/UTP pyrophosphatase (193 aa).

Asp-75 functions as the Proton acceptor in the catalytic mechanism.

Belongs to the Maf family. YhdE subfamily. Requires a divalent metal cation as cofactor.

The protein localises to the cytoplasm. It catalyses the reaction dTTP + H2O = dTMP + diphosphate + H(+). It carries out the reaction UTP + H2O = UMP + diphosphate + H(+). Nucleoside triphosphate pyrophosphatase that hydrolyzes dTTP and UTP. May have a dual role in cell division arrest and in preventing the incorporation of modified nucleotides into cellular nucleic acids. This is dTTP/UTP pyrophosphatase from Koribacter versatilis (strain Ellin345).